The chain runs to 489 residues: Betaine aldehyde dehydrogenase (489 aa).

K(+) contacts are provided by Thr-26 and Asp-93. 150–152 (GAW) serves as a coordination point for NAD(+). Residue Lys-162 is the Charge relay system of the active site. 176–179 (KPSE) is an NAD(+) binding site. A K(+)-binding site is contributed by Val-180. Residue 229 to 232 (GVET) participates in NAD(+) binding. Leu-245 contacts K(+). Glu-251 functions as the Proton acceptor in the catalytic mechanism. NAD(+) is bound by residues Gly-253, Cys-285, and Glu-386. The Nucleophile role is filled by Cys-285. A Cysteine sulfenic acid (-SOH) modification is found at Cys-285. K(+)-binding residues include Lys-456 and Gly-459. Catalysis depends on Glu-463, which acts as the Charge relay system.

Belongs to the aldehyde dehydrogenase family. In terms of assembly, dimer of dimers. It depends on K(+) as a cofactor.

The enzyme catalyses betaine aldehyde + NAD(+) + H2O = glycine betaine + NADH + 2 H(+). It functions in the pathway amine and polyamine biosynthesis; betaine biosynthesis via choline pathway; betaine from betaine aldehyde: step 1/1. Its function is as follows. Involved in the biosynthesis of the osmoprotectant glycine betaine. Catalyzes the irreversible oxidation of betaine aldehyde to the corresponding acid. In Paraburkholderia phymatum (strain DSM 17167 / CIP 108236 / LMG 21445 / STM815) (Burkholderia phymatum), this protein is Betaine aldehyde dehydrogenase.